The primary structure comprises 189 residues: Interferon alpha-D (189 aa).

Positions 1–23 are cleaved as a signal peptide; it reads MAPAWSLLLALLLLSCNAICSLG. 2 disulfides stabilise this stretch: C24–C122 and C52–C162.

Belongs to the alpha/beta interferon family.

The protein localises to the secreted. Its function is as follows. Produced by macrophages, IFN-alpha have antiviral activities. Interferon stimulates the production of two enzymes: a protein kinase and an oligoadenylate synthetase. The chain is Interferon alpha-D (IFNAD) from Bos taurus (Bovine).